We begin with the raw amino-acid sequence, 632 residues long: 1-deoxy-D-xylulose-5-phosphate synthase (632 aa).

Residues 1-25 (MPTTFHEIPRKRPTTPLLDRANTPD) are disordered. Thiamine diphosphate is bound by residues His-87 and 128 to 130 (GHS). Residue Asp-159 coordinates Mg(2+). Thiamine diphosphate-binding positions include 160-161 (GA), Asn-188, Phe-295, and Glu-378. Asn-188 provides a ligand contact to Mg(2+).

This sequence belongs to the transketolase family. DXPS subfamily. In terms of assembly, homodimer. The cofactor is Mg(2+). Thiamine diphosphate is required as a cofactor.

The catalysed reaction is D-glyceraldehyde 3-phosphate + pyruvate + H(+) = 1-deoxy-D-xylulose 5-phosphate + CO2. Its pathway is metabolic intermediate biosynthesis; 1-deoxy-D-xylulose 5-phosphate biosynthesis; 1-deoxy-D-xylulose 5-phosphate from D-glyceraldehyde 3-phosphate and pyruvate: step 1/1. Its function is as follows. Catalyzes the acyloin condensation reaction between C atoms 2 and 3 of pyruvate and glyceraldehyde 3-phosphate to yield 1-deoxy-D-xylulose-5-phosphate (DXP). The polypeptide is 1-deoxy-D-xylulose-5-phosphate synthase (Pseudomonas fluorescens (strain Pf0-1)).